The following is a 475-amino-acid chain: Putative aldehyde dehydrogenase (475 aa).

NAD(+) contacts are provided by residues 146 to 147 (WN) and 223 to 224 (GS). Glutamate 245 serves as the catalytic Proton acceptor. Leucine 246 is an NAD(+) binding site. The active-site Nucleophile is the cysteine 279. An NAD(+)-binding site is contributed by glutamate 379.

Belongs to the aldehyde dehydrogenase family.

The enzyme catalyses an aldehyde + NAD(+) + H2O = a carboxylate + NADH + 2 H(+). This Staphylococcus aureus (strain bovine RF122 / ET3-1) protein is Putative aldehyde dehydrogenase.